Consider the following 336-residue polypeptide: UDP-N-acetylglucosamine--N-acetylmuramyl-(pentapeptide) pyrophosphoryl-undecaprenol N-acetylglucosamine transferase (336 aa).

The UDP-N-acetyl-alpha-D-glucosamine site is built by Asn-102, Arg-144, Ser-172, and Gln-264.

The protein belongs to the glycosyltransferase 28 family. MurG subfamily.

Its subcellular location is the cell membrane. The catalysed reaction is di-trans,octa-cis-undecaprenyl diphospho-N-acetyl-alpha-D-muramoyl-L-alanyl-D-glutamyl-meso-2,6-diaminopimeloyl-D-alanyl-D-alanine + UDP-N-acetyl-alpha-D-glucosamine = di-trans,octa-cis-undecaprenyl diphospho-[N-acetyl-alpha-D-glucosaminyl-(1-&gt;4)]-N-acetyl-alpha-D-muramoyl-L-alanyl-D-glutamyl-meso-2,6-diaminopimeloyl-D-alanyl-D-alanine + UDP + H(+). It participates in cell wall biogenesis; peptidoglycan biosynthesis. Functionally, cell wall formation. Catalyzes the transfer of a GlcNAc subunit on undecaprenyl-pyrophosphoryl-MurNAc-pentapeptide (lipid intermediate I) to form undecaprenyl-pyrophosphoryl-MurNAc-(pentapeptide)GlcNAc (lipid intermediate II). In Rubrobacter xylanophilus (strain DSM 9941 / JCM 11954 / NBRC 16129 / PRD-1), this protein is UDP-N-acetylglucosamine--N-acetylmuramyl-(pentapeptide) pyrophosphoryl-undecaprenol N-acetylglucosamine transferase.